Here is an 808-residue protein sequence, read N- to C-terminus: Copal-8-ol diphosphate hydratase, chloroplastic (808 aa).

Residues 1–50 (MAFTFTSAHLFLPVTENHSVHVNYSIPPGNWRLWSTAKGGSNKLDIRRLR) constitute a chloroplast transit peptide. A coiled-coil region spans residues 190–219 (DKCQKGLKFFRDNISKLEKENVEASAQMLS). Lys-256 lines the substrate pocket. 2 residues coordinate Mg(2+): Asp-391 and Asp-393. The DXDD motif motif lies at 391-394 (DLDD). Position 477 (Lys-477) interacts with substrate.

The protein belongs to the terpene synthase family. The cofactor is Mg(2+). As to expression, expressed in stems, leaves and trichomes. Not detected in roots and seeds. Higher expression in young leaves than in fully expanded leaves.

It localises to the plastid. It is found in the chloroplast. The enzyme catalyses (2E,6E,10E)-geranylgeranyl diphosphate + H2O = 8-hydroxycopalyl diphosphate. Its pathway is secondary metabolite biosynthesis; terpenoid biosynthesis. Functionally, involved in the biosynthesis of oxygen-containing labdane-type diterpenes that may be implicated in direct and indirect defense mechanisms. No activity with geranyl diphosphate or farnesyl diphosphate as substrate. This is Copal-8-ol diphosphate hydratase, chloroplastic from Cistus creticus subsp. creticus (Rock rose).